The primary structure comprises 51 residues: uncharacterized protein (51 aa).

This sequence to E.coli YdaF.

This is an uncharacterized protein from Escherichia coli O157:H7.